Consider the following 110-residue polypeptide: MDKSKRLFVKSKQSIRRSSPLIQSGDRIDYKNLSLLFKFISRQGKILSRRVNKLTLKQQRLITIAIKQARILSLLPFVNSSSFVNNAKKKYEKRKSITRTRTPVLKKKKK.

It belongs to the bacterial ribosomal protein bS18 family. As to quaternary structure, part of the 30S ribosomal subunit.

The protein localises to the plastid. It is found in the chloroplast. In Pisum sativum (Garden pea), this protein is Small ribosomal subunit protein bS18c (rps18).